A 387-amino-acid chain; its full sequence is 3-ketoacyl-CoA thiolase (387 aa).

C91 (acyl-thioester intermediate) is an active-site residue. Catalysis depends on proton acceptor residues H343 and C373.

The protein belongs to the thiolase-like superfamily. Thiolase family. Heterotetramer of two alpha chains (FadB) and two beta chains (FadA).

It is found in the cytoplasm. It carries out the reaction an acyl-CoA + acetyl-CoA = a 3-oxoacyl-CoA + CoA. It functions in the pathway lipid metabolism; fatty acid beta-oxidation. Its function is as follows. Catalyzes the final step of fatty acid oxidation in which acetyl-CoA is released and the CoA ester of a fatty acid two carbons shorter is formed. The sequence is that of 3-ketoacyl-CoA thiolase from Pectobacterium carotovorum subsp. carotovorum (strain PC1).